A 119-amino-acid chain; its full sequence is Methylglyoxal synthase (119 aa).

The MGS-like domain occupies 1–119 (MRIALIAHDK…GTADLIIRQF (119 aa)). Substrate contacts are provided by residues H8, K12, 34-37 (TGTT), and 54-55 (SG). The active-site Proton donor/acceptor is D60. H87 is a substrate binding site.

Belongs to the methylglyoxal synthase family.

It carries out the reaction dihydroxyacetone phosphate = methylglyoxal + phosphate. Its function is as follows. Catalyzes the formation of methylglyoxal from dihydroxyacetone phosphate. The protein is Methylglyoxal synthase of Clostridium botulinum (strain Alaska E43 / Type E3).